Consider the following 936-residue polypeptide: Protocadherin gamma-A10 (936 aa).

A signal peptide spans 1 to 32 (MAAQRNRSKESKDCSGLVLLCLFFGIPWEAGA). Cadherin domains are found at residues 33-137 (RQIS…APTF), 138-246 (QAEN…APVF), 247-351 (TLPE…SPEL), 352-456 (TITS…PPTF), 457-566 (SQVS…APEI), and 574-687 (DGST…SPAN). The Extracellular portion of the chain corresponds to 33-696 (RQISYSIPEE…NSETSDLTLY (664 aa)). N-linked (GlcNAc...) asparagine glycosylation occurs at Asn51. 2 N-linked (GlcNAc...) asparagine glycosylation sites follow: Asn423 and Asn549. Residues 697-717 (LVVAVAAVSCVFLAFVIVLLA) form a helical membrane-spanning segment. Over 718 to 936 (LRLRRWHKSR…KKKSGKKEKK (219 aa)) the chain is Cytoplasmic. 2 disordered regions span residues 801–845 (SKFP…WPNN) and 906–936 (ATLTNAAGKRDGKAPAGGNGNKKKSGKKEKK). Polar residues predominate over residues 820–845 (WRFSQAQRPGTSGSQNGDDTGTWPNN). A compositionally biased stretch (basic residues) spans 926–936 (NKKKSGKKEKK).

The protein localises to the cell membrane. Functionally, potential calcium-dependent cell-adhesion protein. May be involved in the establishment and maintenance of specific neuronal connections in the brain. This Pan troglodytes (Chimpanzee) protein is Protocadherin gamma-A10 (PCDHGA10).